Reading from the N-terminus, the 296-residue chain is D-alanine--D-alanine ligase (296 aa).

An ATP-grasp domain is found at 103–293; it reads KEILMHYRMP…FDSFVKRIIE (191 aa). Position 129–180 (129–180) interacts with ATP; the sequence is ISFPVAVKPSSGGSSIATFKVKSIQELKHAYEEASKYGEVMIEQWVTGKEIT. The Mg(2+) site is built by Asp247, Glu260, and Asn262.

Belongs to the D-alanine--D-alanine ligase family. Requires Mg(2+) as cofactor. It depends on Mn(2+) as a cofactor.

It localises to the cytoplasm. The catalysed reaction is 2 D-alanine + ATP = D-alanyl-D-alanine + ADP + phosphate + H(+). It participates in cell wall biogenesis; peptidoglycan biosynthesis. Functionally, cell wall formation. The sequence is that of D-alanine--D-alanine ligase from Francisella tularensis subsp. tularensis (strain WY96-3418).